Reading from the N-terminus, the 353-residue chain is MPDSPTESYGPDREYHVFISLFLCRNTSGKFLSVGPATPGWSINNTVVKENYYTEKLSCIITFNTLNFLTATISVVGTAGNATVLRLLGFHMHRYAFSVYVFNLAGADFLYLCTQTVYSLECVLQFDNSYFYFLLTILMFAYLAALCMIPAISTERCLSVTWPIWYHCQRPRHTSATVCALFWAFSLLLRLLLGQGCGFLFGKYDYYFCRYCSFITTAFLIVLFVVPFVSSLAMLTKIICGSHRIPVTRFYVTIAVTVLVFTFFGLPVGIISLLLPRIVVFRGVFYIYKIVTFLYSVNCCANPIIYFLIGSIRHHRLQRQSLKLLLQRAMQDTPEEEGGVKGPSQKSNELEIV.

At 1–67 (MPDSPTESYG…SCIITFNTLN (67 aa)) the chain is on the extracellular side. N26 and N44 each carry an N-linked (GlcNAc...) asparagine glycan. Residues 68–90 (FLTATISVVGTAGNATVLRLLGF) traverse the membrane as a helical segment. Over 91-96 (HMHRYA) the chain is Cytoplasmic. Residues 97–117 (FSVYVFNLAGADFLYLCTQTV) traverse the membrane as a helical segment. Residues 118–131 (YSLECVLQFDNSYF) lie on the Extracellular side of the membrane. The chain crosses the membrane as a helical span at residues 132–152 (YFLLTILMFAYLAALCMIPAI). Over 153–180 (STERCLSVTWPIWYHCQRPRHTSATVCA) the chain is Cytoplasmic. A helical membrane pass occupies residues 181 to 201 (LFWAFSLLLRLLLGQGCGFLF). Residues 202-213 (GKYDYYFCRYCS) are Extracellular-facing. The chain crosses the membrane as a helical span at residues 214–234 (FITTAFLIVLFVVPFVSSLAM). Over 235-253 (LTKIICGSHRIPVTRFYVT) the chain is Cytoplasmic. A helical membrane pass occupies residues 254 to 274 (IAVTVLVFTFFGLPVGIISLL). Residues 275–289 (LPRIVVFRGVFYIYK) lie on the Extracellular side of the membrane. Residues 290–310 (IVTFLYSVNCCANPIIYFLIG) form a helical membrane-spanning segment. Residues 311-353 (SIRHHRLQRQSLKLLLQRAMQDTPEEEGGVKGPSQKSNELEIV) lie on the Cytoplasmic side of the membrane. The segment at 333-353 (TPEEEGGVKGPSQKSNELEIV) is disordered.

This sequence belongs to the G-protein coupled receptor 1 family. Mas subfamily. In terms of tissue distribution, expressed strongly in newborn dorsal root ganglia, adult dorsal root ganglia and trigeminal ganlia.

The protein localises to the membrane. In terms of biological role, orphan receptor. Probably involved in the function of nociceptive neurons. May regulate nociceptor function and/or development, including the sensation or modulation of pain. This is Mas-related G-protein coupled receptor member B5 (Mrgprb5) from Rattus norvegicus (Rat).